The sequence spans 761 residues: Dipeptidyl-peptidase 4 (761 aa).

The signal sequence occupies residues 1–15 (MTLSAWIILVTLAMA). Catalysis depends on charge relay system residues serine 622, aspartate 706, and histidine 738.

This sequence belongs to the peptidase S9C family.

It is found in the membrane. In terms of biological role, may be involved in metabolism of dipeptides or may affect host defense mechanisms. This Giardia intestinalis (Giardia lamblia) protein is Dipeptidyl-peptidase 4 (DPP).